The chain runs to 381 residues: Alkanesulfonate monooxygenase (381 aa).

This sequence belongs to the SsuD family. As to quaternary structure, homotetramer.

The enzyme catalyses an alkanesulfonate + FMNH2 + O2 = an aldehyde + FMN + sulfite + H2O + 2 H(+). In terms of biological role, catalyzes the desulfonation of aliphatic sulfonates. This Escherichia coli O9:H4 (strain HS) protein is Alkanesulfonate monooxygenase.